The primary structure comprises 23 residues: Alyteserin-1d (23 aa).

Asn-23 is modified (asparagine amide).

In terms of tissue distribution, expressed by the skin glands.

It localises to the secreted. Its subcellular location is the target cell membrane. In terms of biological role, antibacterial peptide with amphipathic alpha-helical structure. Shows selective growth inhibitory activity against the Gram-negative bacteria E.coli (MIC=25 uM) Has a weak hemolytic activity against human erythrocytes (LC(50)&gt;100 uM). Is very weakly active against S.aureus (MIC=200 uM). This is Alyteserin-1d from Alytes obstetricans (Common midwife toad).